Here is a 414-residue protein sequence, read N- to C-terminus: Putative MSV199 domain-containing protein 148R (414 aa).

The stretch at 209-293 (DKMQISSLET…DSVVEKLGIA (85 aa)) forms a coiled coil.

This is Putative MSV199 domain-containing protein 148R from Acheta domesticus (House cricket).